The primary structure comprises 93 residues: UPF0337 protein Bd3330 (93 aa).

Belongs to the UPF0337 (CsbD) family.

The chain is UPF0337 protein Bd3330 from Bdellovibrio bacteriovorus (strain ATCC 15356 / DSM 50701 / NCIMB 9529 / HD100).